The chain runs to 1229 residues: DNA-directed RNA polymerase subunit beta (1229 aa).

It belongs to the RNA polymerase beta chain family. In terms of assembly, the RNAP catalytic core consists of 2 alpha, 1 beta, 1 beta' and 1 omega subunit. When a sigma factor is associated with the core the holoenzyme is formed, which can initiate transcription.

It catalyses the reaction RNA(n) + a ribonucleoside 5'-triphosphate = RNA(n+1) + diphosphate. Its function is as follows. DNA-dependent RNA polymerase catalyzes the transcription of DNA into RNA using the four ribonucleoside triphosphates as substrates. In Roseiflexus sp. (strain RS-1), this protein is DNA-directed RNA polymerase subunit beta.